The sequence spans 133 residues: Fatty acid-binding protein homolog 2 (133 aa).

Residues R107 and 127–129 (RTY) contribute to the a fatty acid site.

This sequence belongs to the calycin superfamily. Fatty-acid binding protein (FABP) family.

Its function is as follows. May play a role in the acquisition, storage, and transport of lipids, and may be important to the organism since it is incapable of synthesizing most of its lipids de novo. The sequence is that of Fatty acid-binding protein homolog 2 (FABP2) from Echinococcus granulosus (Hydatid tapeworm).